Here is a 269-residue protein sequence, read N- to C-terminus: Cell wall protein TIR3 (269 aa).

Positions 1-22 (MSFTKIAALLAVAAASTQLVSA) are cleaved as a signal peptide. A disordered region spans residues 128–242 (SGSESATASS…TNSSSSATSK (115 aa)). A glycan (N-linked (GlcNAc...) asparagine) is linked at asparagine 234. Glycine 245 is lipidated: GPI-anchor amidated glycine. The propeptide at 246–269 (AAMDMGFFSAGVGAAIAGAAAMLL) is removed in mature form.

It belongs to the SRP1/TIP1 family. Extensively O-glycosylated. Post-translationally, the GPI-anchor is attached to the protein in the endoplasmic reticulum and serves to target the protein to the cell surface. There, the glucosamine-inositol phospholipid moiety is cleaved off and the GPI-modified mannoprotein is covalently attached via its lipidless GPI glycan remnant to the 1,6-beta-glucan of the outer cell wall layer.

It localises to the secreted. Its subcellular location is the cell wall. It is found in the membrane. Its function is as follows. Component of the cell wall. Required for anaerobic growth. This chain is Cell wall protein TIR3 (TIR3), found in Saccharomyces cerevisiae (strain ATCC 204508 / S288c) (Baker's yeast).